The following is a 173-amino-acid chain: Co-chaperone protein HscB homolog (173 aa).

Residues 5-77 (CHFALFELQP…AQRARYLLTI (73 aa)) enclose the J domain.

Belongs to the HscB family. Interacts with HscA and stimulates its ATPase activity.

Its function is as follows. Co-chaperone involved in the maturation of iron-sulfur cluster-containing proteins. Seems to help targeting proteins to be folded toward HscA. This is Co-chaperone protein HscB homolog from Pseudomonas fluorescens (strain Pf0-1).